The chain runs to 61 residues: Weak toxin CM-2 (61 aa).

Cystine bridges form between Cys-3–Cys-21, Cys-14–Cys-37, Cys-41–Cys-53, and Cys-54–Cys-59.

The protein belongs to the three-finger toxin family. Short-chain subfamily. Orphan group VI sub-subfamily. As to expression, expressed by the venom gland.

It is found in the secreted. The chain is Weak toxin CM-2 from Naja haje haje (Egyptian cobra).